A 441-amino-acid polypeptide reads, in one-letter code: Anti-sigma-I factor RsgI (441 aa).

Residues 1–53 lie on the Cytoplasmic side of the membrane; it reads MMNKGIVMDIKKHSVVVLTPNGEFITCKRKGDSCMIGEEISFDEQEQKASRFS. Residues 3 to 51 form the RsgI N-terminal anti-sigma domain; it reads NKGIVMDIKKHSVVVLTPNGEFITCKRKGDSCMIGEEISFDEQEQKASR. Residues 54–76 form a helical membrane-spanning segment; the sequence is IPYFLKPASLLVACFLCALLFFY. Over 77–441 the chain is Extracellular; sequence NQPEEKVFAY…HQQGNEKKNQ (365 aa). A disordered region spans residues 213 to 441; that stretch reads ENEKNKSVTP…HQQGNEKKNQ (229 aa). The span at 219-230 shows a compositional bias: polar residues; the sequence is SVTPPATPSNPV. The segment covering 240–251 has biased composition (low complexity); it reads PDSSPDVVPDLS. Residues 252–281 show a composition bias toward basic and acidic residues; that stretch reads SVKDKKYEKPEYKEQKKIEEQPTKQIKENN. Low complexity-rich tracts occupy residues 282–328, 336–358, and 366–408; these read GRGS…QQGN, NNGH…QQGN, and NNGH…NGRG. Over residues 411–428 the composition is skewed to polar residues; that stretch reads KENVGNEQGNNGRGSQQE. The span at 429–441 shows a compositional bias: basic and acidic residues; that stretch reads NRGHQQGNEKKNQ.

In terms of assembly, interacts (via RsgI N-terminal anti-sigma domain) with SigI.

It localises to the cell membrane. Anti-sigma factor for SigI. Negatively regulates SigI activity through direct interaction. Has no direct effect on virulence gene expression. This Bacillus anthracis protein is Anti-sigma-I factor RsgI.